Consider the following 521-residue polypeptide: MFS siderochrome iron transporter 1 (521 aa).

Over residues 1–10 (MDKTASLTSQ) the composition is skewed to polar residues. Residues 1–29 (MDKTASLTSQDAEKHDPDALRKERATDPP) are disordered. The span at 11 to 29 (DAEKHDPDALRKERATDPP) shows a compositional bias: basic and acidic residues. 5 consecutive transmembrane segments (helical) span residues 62–82 (WGLF…PLMG), 99–119 (FLSL…AFGC), 126–146 (WSFN…GGTQ), 148–168 (FVAL…NMPV), and 187–207 (ILSI…WPLI). Asn209 carries an N-linked (GlcNAc...) asparagine glycan. 6 consecutive transmembrane segments (helical) span residues 229–249 (YLLF…FFVF), 330–350 (LAWS…ASTL), 379–399 (VIIA…VEQP), 404–424 (KGTL…TTTA), 431–451 (LGWN…LYAI), and 466–486 (GLTA…ALYA). Asn487 carries an N-linked (GlcNAc...) asparagine glycan. The chain crosses the membrane as a helical span at residues 491 to 511 (AVPVYVSGALIIASGAMALLL).

The protein belongs to the major facilitator superfamily.

The protein localises to the membrane. In terms of biological role, major facilitator transporter probably involved in siderophore basidioferrin transmembrane transport. The polypeptide is MFS siderochrome iron transporter 1 (Ceriporiopsis subvermispora (strain B) (White-rot fungus)).